Reading from the N-terminus, the 460-residue chain is UDP-N-acetylmuramate--L-alanine ligase (460 aa).

An ATP-binding site is contributed by 119–125; the sequence is GSHGKTT.

This sequence belongs to the MurCDEF family.

The protein resides in the cytoplasm. It catalyses the reaction UDP-N-acetyl-alpha-D-muramate + L-alanine + ATP = UDP-N-acetyl-alpha-D-muramoyl-L-alanine + ADP + phosphate + H(+). It participates in cell wall biogenesis; peptidoglycan biosynthesis. In terms of biological role, cell wall formation. This chain is UDP-N-acetylmuramate--L-alanine ligase, found in Alkaliphilus metalliredigens (strain QYMF).